Consider the following 350-residue polypeptide: DNA repair protein rhp55 (350 aa).

51 to 58 (GAPGMGKT) provides a ligand contact to ATP. The disordered stretch occupies residues 331–350 (QSIPTNSSQRRKRSILECES).

This sequence belongs to the RecA family. RAD55 subfamily.

The protein resides in the nucleus. Functionally, required for radiation resistance and meiotic viability and acts in recombination and recombinational DNA repair pathways. The polypeptide is DNA repair protein rhp55 (rhp55) (Schizosaccharomyces pombe (strain 972 / ATCC 24843) (Fission yeast)).